Reading from the N-terminus, the 404-residue chain is Cysteine desulfurase IscS (404 aa).

Residues 75-76 (AT), Asn155, Gln183, and 203-205 (SAH) contribute to the pyridoxal 5'-phosphate site. Residue Lys206 is modified to N6-(pyridoxal phosphate)lysine. Position 243 (Thr243) interacts with pyridoxal 5'-phosphate. Catalysis depends on Cys328, which acts as the Cysteine persulfide intermediate. Position 328 (Cys328) interacts with [2Fe-2S] cluster.

It belongs to the class-V pyridoxal-phosphate-dependent aminotransferase family. NifS/IscS subfamily. Homodimer. Forms a heterotetramer with IscU, interacts with other sulfur acceptors. It depends on pyridoxal 5'-phosphate as a cofactor.

The protein localises to the cytoplasm. The enzyme catalyses (sulfur carrier)-H + L-cysteine = (sulfur carrier)-SH + L-alanine. Its pathway is cofactor biosynthesis; iron-sulfur cluster biosynthesis. Master enzyme that delivers sulfur to a number of partners involved in Fe-S cluster assembly, tRNA modification or cofactor biosynthesis. Catalyzes the removal of elemental sulfur atoms from cysteine to produce alanine. Functions as a sulfur delivery protein for Fe-S cluster synthesis onto IscU, an Fe-S scaffold assembly protein, as well as other S acceptor proteins. This chain is Cysteine desulfurase IscS, found in Pseudomonas aeruginosa (strain UCBPP-PA14).